We begin with the raw amino-acid sequence, 432 residues long: Glutamyl-tRNA reductase (432 aa).

Residues 49-52, serine 109, 114-116, and glutamine 120 each bind substrate; these read TCNR and EGQ. Cysteine 50 acts as the Nucleophile in catalysis. 189 to 194 provides a ligand contact to NADP(+); sequence GAGKMS.

Belongs to the glutamyl-tRNA reductase family. Homodimer.

The enzyme catalyses (S)-4-amino-5-oxopentanoate + tRNA(Glu) + NADP(+) = L-glutamyl-tRNA(Glu) + NADPH + H(+). It participates in porphyrin-containing compound metabolism; protoporphyrin-IX biosynthesis; 5-aminolevulinate from L-glutamyl-tRNA(Glu): step 1/2. Its pathway is porphyrin-containing compound metabolism; chlorophyll biosynthesis. Catalyzes the NADPH-dependent reduction of glutamyl-tRNA(Glu) to glutamate 1-semialdehyde (GSA). The sequence is that of Glutamyl-tRNA reductase from Cyanothece sp. (strain PCC 7425 / ATCC 29141).